Reading from the N-terminus, the 68-residue chain is Ferredoxin Fdx (68 aa).

Positions 12, 13, 16, 18, and 56 each coordinate [3Fe-4S] cluster.

Requires [3Fe-4S] cluster as cofactor.

Its function is as follows. Ferredoxin that is the redox partner of cytochrome CYP51, a sterol 14alpha-demethylase encoded by an adjacent gene. This chain is Ferredoxin Fdx, found in Mycobacterium tuberculosis (strain ATCC 25618 / H37Rv).